A 136-amino-acid chain; its full sequence is DNA-directed RNA polymerase subunit omega (136 aa).

Belongs to the RNA polymerase subunit omega family. The RNAP catalytic core consists of 2 alpha, 1 beta, 1 beta' and 1 omega subunit. When a sigma factor is associated with the core the holoenzyme is formed, which can initiate transcription.

It carries out the reaction RNA(n) + a ribonucleoside 5'-triphosphate = RNA(n+1) + diphosphate. In terms of biological role, promotes RNA polymerase assembly. Latches the N- and C-terminal regions of the beta' subunit thereby facilitating its interaction with the beta and alpha subunits. The chain is DNA-directed RNA polymerase subunit omega from Acidiphilium cryptum (strain JF-5).